The chain runs to 292 residues: AKT-interacting protein (292 aa).

Residues 1–11 are compositionally biased toward polar residues; sequence MNPFWSMSTSS. Residues 1 to 63 form a disordered region; the sequence is MNPFWSMSTS…TSPAPAAQST (63 aa). Residues 14-23 show a composition bias toward basic and acidic residues; it reads KRSEGEEKTL. S30 bears the Phosphoserine mark. One can recognise a UBC core domain in the interval 74–222; sequence YLEYSLLAEF…VVDSVKVCTA (149 aa).

This sequence belongs to the ubiquitin-conjugating enzyme family. FTS subfamily. Component of the FTS/Hook/FHIP complex (FHF complex), composed of AKTIP/FTS, FHIP1B, and one or more members of the Hook family of proteins HOOK1, HOOK2, and HOOK3. Interacts directly with HOOK1, HOOK2 and HOOK3. The FHF complex associates with the homotypic vesicular sorting complex (the HOPS complex). Also interacts with AKT1. May interact with FHIP1A.

The protein resides in the cytoplasm. The protein localises to the cell membrane. Its function is as follows. Component of the FTS/Hook/FHIP complex (FHF complex). The FHF complex may function to promote vesicle trafficking and/or fusion via the homotypic vesicular protein sorting complex (the HOPS complex). Regulates apoptosis by enhancing phosphorylation and activation of AKT1. Increases release of TNFSF6 via the AKT1/GSK3B/NFATC1 signaling cascade. FHF complex promotes the distribution of AP-4 complex to the perinuclear area of the cell. The protein is AKT-interacting protein of Homo sapiens (Human).